Reading from the N-terminus, the 195-residue chain is Interferon omega-1 (195 aa).

A signal peptide (or 23 in some molecules) is located at residues 1–21 (MALLFPLLAALVMTSYSPVGS). 2 disulfides stabilise this stretch: Cys-24-Cys-122 and Cys-52-Cys-162. An N-linked (GlcNAc...) asparagine glycan is attached at Asn-101.

This sequence belongs to the alpha/beta interferon family.

The protein localises to the secreted. The sequence is that of Interferon omega-1 (IFNW1) from Homo sapiens (Human).